Here is a 419-residue protein sequence, read N- to C-terminus: Putative competence-damage inducible protein (419 aa).

Belongs to the CinA family.

In Lysinibacillus sphaericus (strain C3-41), this protein is Putative competence-damage inducible protein.